We begin with the raw amino-acid sequence, 483 residues long: Protein nucleotidyltransferase YdiU (483 aa).

Residues G87, G89, R90, K110, D122, G123, R173, and R180 each coordinate ATP. The active-site Proton acceptor is D249. Residues N250 and D259 each coordinate Mg(2+). D259 contributes to the ATP binding site.

This sequence belongs to the SELO family. It depends on Mg(2+) as a cofactor. Requires Mn(2+) as cofactor.

It catalyses the reaction L-seryl-[protein] + ATP = 3-O-(5'-adenylyl)-L-seryl-[protein] + diphosphate. The catalysed reaction is L-threonyl-[protein] + ATP = 3-O-(5'-adenylyl)-L-threonyl-[protein] + diphosphate. It carries out the reaction L-tyrosyl-[protein] + ATP = O-(5'-adenylyl)-L-tyrosyl-[protein] + diphosphate. The enzyme catalyses L-histidyl-[protein] + UTP = N(tele)-(5'-uridylyl)-L-histidyl-[protein] + diphosphate. It catalyses the reaction L-seryl-[protein] + UTP = O-(5'-uridylyl)-L-seryl-[protein] + diphosphate. The catalysed reaction is L-tyrosyl-[protein] + UTP = O-(5'-uridylyl)-L-tyrosyl-[protein] + diphosphate. Functionally, nucleotidyltransferase involved in the post-translational modification of proteins. It can catalyze the addition of adenosine monophosphate (AMP) or uridine monophosphate (UMP) to a protein, resulting in modifications known as AMPylation and UMPylation. This Pelagibacter ubique (strain HTCC1062) protein is Protein nucleotidyltransferase YdiU.